The chain runs to 802 residues: Ras GTPase-activating protein 4 (802 aa).

C2 domains follow at residues 1 to 105 and 116 to 232; these read MAKR…SGWT and VQGE…EGWF. Residues Asp21, Asp27, Asp74, Asp76, Ser79, Asp82, Asp149, Asp155, Asp202, Asp204, Ser207, and Asp210 each contribute to the Ca(2+) site. The Ras-GAP domain occupies 317-545; sequence GLAKDFLDLL…AQLKDFIMKL (229 aa). The region spanning 565-672 is the PH domain; sequence PPVKEGPLFI…WLSALRKAST (108 aa). The segment at 674–710 adopts a Btk-type zinc-finger fold; the sequence is NRGLLRSYHPGIFRGDKWSCCHQKDKTDQGCDKTHSR. His682, Cys693, Cys694, and Cys704 together coordinate Zn(2+).

Ca(2+) serves as cofactor. Isoform 2 is expressed in osteoblasts.

It is found in the cytoplasm. The protein resides in the cytosol. The protein localises to the cell membrane. Ca(2+)-dependent Ras GTPase-activating protein, that switches off the Ras-MAPK pathway following a stimulus that elevates intracellular calcium. Functions as an adaptor for Cdc42 and Rac1 during FcR-mediated phagocytosis. Isoform 2 activates the Ras pathway and promotes RANKL shedding by modulating the expression of MMP14. The sequence is that of Ras GTPase-activating protein 4 (Rasa4) from Mus musculus (Mouse).